We begin with the raw amino-acid sequence, 624 residues long: Outer dynein arm-docking complex subunit 4 (624 aa).

8 TPR repeats span residues 11-44, 46-78, 79-112, 273-309, 318-351, 358-391, 395-428, and 435-468; these read FPSY…QSGD, NCLV…DPTF, CKGI…RPDR, LKSL…NQEE, GNLY…AKEH, SRAL…AKTT, TWLF…AEEE, and LNAS…AKLV. Residues 511 to 624 form a disordered region; sequence MSQMDLQGAS…VQKLEKTKEE (114 aa). 3 stretches are compositionally biased toward basic and acidic residues: residues 520 to 557, 576 to 588, and 595 to 624; these read SEKE…DRKS, IRRE…RRLS, and PSED…TKEE.

As to quaternary structure, component of the outer dynein arm-docking complex along with ODAD1, ODAD2, and ODAD3. Interacts with ODAD1; this interaction may facilitate the recruitment and/or attachment of outer dynein arm docking complex proteins, including ODAD1, ODAD3 and ODAD2, to ciliary axonemes. Interacts with components of the IFT complex A, including IFT140, TTC21B/IFT139 and WDR19/IFT144, and the IFT complex B, including IFT46, IFT52 and IFT57. Interacts with CFAP53.

The protein resides in the cell projection. It localises to the cilium. Its subcellular location is the cytoplasm. It is found in the cytoskeleton. The protein localises to the cilium axoneme. Its function is as follows. Component of the outer dynein arm-docking complex (ODA-DC) that mediates outer dynein arms (ODA) binding onto the doublet microtubule. Plays an essential role for the assembly of ODA-DC and for the docking of ODA in ciliary axoneme. The polypeptide is Outer dynein arm-docking complex subunit 4 (Odad4) (Mus musculus (Mouse)).